Consider the following 294-residue polypeptide: ATP synthase gamma chain (294 aa).

Belongs to the ATPase gamma chain family. As to quaternary structure, F-type ATPases have 2 components, CF(1) - the catalytic core - and CF(0) - the membrane proton channel. CF(1) has five subunits: alpha(3), beta(3), gamma(1), delta(1), epsilon(1). CF(0) has three main subunits: a, b and c.

The protein localises to the cell inner membrane. Its function is as follows. Produces ATP from ADP in the presence of a proton gradient across the membrane. The gamma chain is believed to be important in regulating ATPase activity and the flow of protons through the CF(0) complex. The sequence is that of ATP synthase gamma chain from Mesorhizobium japonicum (strain LMG 29417 / CECT 9101 / MAFF 303099) (Mesorhizobium loti (strain MAFF 303099)).